A 121-amino-acid polypeptide reads, in one-letter code: Large ribosomal subunit protein uL14c (121 aa).

It belongs to the universal ribosomal protein uL14 family. Part of the 50S ribosomal subunit.

It is found in the plastid. The protein resides in the chloroplast. Binds to 23S rRNA. The chain is Large ribosomal subunit protein uL14c from Emiliania huxleyi (Coccolithophore).